The chain runs to 371 residues: GPI mannosyltransferase 1 (371 aa).

8 consecutive transmembrane segments (helical) span residues 64-84 (FPSW…WLMI), 120-140 (AILG…SVWL), 144-164 (ILGF…AFLV), 190-210 (IVVG…YLYG), 248-268 (ASSL…PLVF), 290-310 (VCTS…LPNS), 318-338 (LICL…AYNL), and 344-364 (SVFI…VYEL).

Belongs to the PIGM family.

It localises to the endoplasmic reticulum membrane. Its pathway is glycolipid biosynthesis; glycosylphosphatidylinositol-anchor biosynthesis. In terms of biological role, mannosyltransferase involved in glycosylphosphatidylinositol-anchor biosynthesis. Transfers the first alpha-1,4-mannose to GlcN-acyl-PI during GPI precursor assembly. Required for cell wall integrity. The polypeptide is GPI mannosyltransferase 1 (gpi14) (Schizosaccharomyces pombe (strain 972 / ATCC 24843) (Fission yeast)).